The sequence spans 357 residues: Alanine racemase (357 aa).

K35 serves as the catalytic Proton acceptor; specific for D-alanine. At K35 the chain carries N6-(pyridoxal phosphate)lysine. R128 provides a ligand contact to substrate. Catalysis depends on Y254, which acts as the Proton acceptor; specific for L-alanine. M302 serves as a coordination point for substrate.

Belongs to the alanine racemase family. The cofactor is pyridoxal 5'-phosphate.

It carries out the reaction L-alanine = D-alanine. It participates in amino-acid biosynthesis; D-alanine biosynthesis; D-alanine from L-alanine: step 1/1. Its function is as follows. Catalyzes the interconversion of L-alanine and D-alanine. May also act on other amino acids. The polypeptide is Alanine racemase (alr) (Marinobacter nauticus (strain ATCC 700491 / DSM 11845 / VT8) (Marinobacter aquaeolei)).